The primary structure comprises 448 residues: 5-hydroxytryptamine receptor 7 (448 aa).

At 1 to 86 (MMDVNSSGRP…INYGRVEKVV (86 aa)) the chain is on the extracellular side. 2 N-linked (GlcNAc...) asparagine glycosylation sites follow: asparagine 5 and asparagine 69. Residues 87–111 (IGSILTLITLLTIAGNCLVVISVCF) form a helical membrane-spanning segment. Topologically, residues 112 to 121 (VKKLRQPSNY) are cytoplasmic. A helical transmembrane segment spans residues 122 to 143 (LIVSLALADLSVAVAVMPFVSV). Residues 144-155 (TDLIGGKWIFGH) lie on the Extracellular side of the membrane. Residues 156–181 (FFCNVFIAMDVMCCTASIMTLCVISI) traverse the membrane as a helical segment. A disulfide bridge links cysteine 158 with cysteine 234. Residue aspartate 165 participates in serotonin binding. Residues 182 to 201 (DRYLGITRPLTYPVRQNGKC) lie on the Cytoplasmic side of the membrane. The chain crosses the membrane as a helical span at residues 202 to 222 (MAKMILSVWLLSASITLPPLF). At 223–240 (GWAQNVNDDKVCLISQDF) the chain is on the extracellular side. Residues 241–263 (GYTIYSTAVAFYIPMSVMLFMYY) form a helical membrane-spanning segment. At 264 to 329 (QIYKAARKSA…SIFKREQKAA (66 aa)) the chain is on the cytoplasmic side. The helical transmembrane segment at 330–355 (TTLGIIVGAFTVCWLPFFLLSTARPF) threads the bilayer. Residues 356 to 366 (ICGTSCSCIPL) lie on the Extracellular side of the membrane. The helical transmembrane segment at 367 to 390 (WVERTCLWLGYANSLINPFIYAFF) threads the bilayer. Over 391-448 (NRDLRTTYRSLLQCQYRNINRKLSAAGMHEALKLAERPERSEFVLQNCDHCGKKGHDT) the chain is Cytoplasmic. A lipid anchor (S-palmitoyl cysteine) is attached at cysteine 404.

The protein belongs to the G-protein coupled receptor 1 family.

The protein localises to the cell membrane. G-protein coupled receptor for 5-hydroxytryptamine (serotonin), a biogenic hormone that functions as a neurotransmitter, a hormone and a mitogen. Ligand binding causes a conformation change that triggers signaling via guanine nucleotide-binding proteins (G proteins) and modulates the activity of downstream effectors. HTR7 is coupled to G(s) G alpha proteins and mediates activation of adenylate cyclase activity. This chain is 5-hydroxytryptamine receptor 7 (Htr7), found in Mus musculus (Mouse).